The chain runs to 556 residues: Arginine--tRNA ligase (556 aa).

A 'HIGH' region motif is present at residues 133 to 143; the sequence is ANPTGPIHIGH.

It belongs to the class-I aminoacyl-tRNA synthetase family. Monomer.

It localises to the cytoplasm. It catalyses the reaction tRNA(Arg) + L-arginine + ATP = L-arginyl-tRNA(Arg) + AMP + diphosphate. The sequence is that of Arginine--tRNA ligase from Dehalococcoides mccartyi (strain ATCC BAA-2100 / JCM 16839 / KCTC 5957 / BAV1).